The sequence spans 412 residues: CapZ-interacting protein (412 aa).

Disordered regions lie at residues 1-84 (MEER…KSSP) and 99-412 (ALLP…DTRM). Residues 7–20 (ETNSNVDSSAQPSV) are compositionally biased toward polar residues. A phosphoserine mark is found at S68, S82, S83, S105, S108, S116, S120, and S123. T124 is subject to Phosphothreonine. Phosphoserine occurs at positions 126, 127, 135, and 143. Over residues 159–176 (VRTRGSIKRRPPSRRFRR) the composition is skewed to basic residues. S177, S179, and S216 each carry phosphoserine. 2 positions are modified to phosphothreonine: T243 and T256. Residues 248–258 (EKPEELVRTPE) are compositionally biased toward basic and acidic residues. Residue S297 is modified to Phosphoserine. Composition is skewed to basic and acidic residues over residues 298 to 312 (PREE…DTGK) and 319 to 330 (SEERVADEDRLG). S333 and S401 each carry phosphoserine.

In terms of assembly, interacts with CAPZA2 and CAPZB. Dephosphorylation results in its dissociation from CAPZA2.

Functionally, stress-induced phosphorylation of CAPZIP may regulate the ability of F-actin-capping protein to remodel actin filament assembly. The chain is CapZ-interacting protein (Rcsd1) from Mus musculus (Mouse).